Here is an 833-residue protein sequence, read N- to C-terminus: Leucine--tRNA ligase (833 aa).

Residues 41 to 52 (PYPSGAGLHVGH) carry the 'HIGH' region motif. Positions 610-614 (KMSKS) match the 'KMSKS' region motif. Lys613 serves as a coordination point for ATP.

It belongs to the class-I aminoacyl-tRNA synthetase family.

The protein resides in the cytoplasm. It carries out the reaction tRNA(Leu) + L-leucine + ATP = L-leucyl-tRNA(Leu) + AMP + diphosphate. The chain is Leucine--tRNA ligase from Streptococcus mutans serotype c (strain ATCC 700610 / UA159).